The primary structure comprises 442 residues: tRNA-2-methylthio-N(6)-dimethylallyladenosine synthase (442 aa).

Residues 2-120 form the MTTase N-terminal domain; that stretch reads KKVFIRTFGC…LPKMIVDKET (119 aa). [4Fe-4S] cluster is bound by residues cysteine 11, cysteine 49, cysteine 83, cysteine 157, cysteine 161, and cysteine 164. The 233-residue stretch at 143-375 folds into the Radical SAM core domain; that stretch reads RVEGGAAFVS…NEVIEAETAR (233 aa). The TRAM domain maps to 378–441; it reads QTMIGTVQRC…TFSLRGKIVE (64 aa).

It belongs to the methylthiotransferase family. MiaB subfamily. Monomer. The cofactor is [4Fe-4S] cluster.

The protein localises to the cytoplasm. The catalysed reaction is N(6)-dimethylallyladenosine(37) in tRNA + (sulfur carrier)-SH + AH2 + 2 S-adenosyl-L-methionine = 2-methylsulfanyl-N(6)-dimethylallyladenosine(37) in tRNA + (sulfur carrier)-H + 5'-deoxyadenosine + L-methionine + A + S-adenosyl-L-homocysteine + 2 H(+). Its function is as follows. Catalyzes the methylthiolation of N6-(dimethylallyl)adenosine (i(6)A), leading to the formation of 2-methylthio-N6-(dimethylallyl)adenosine (ms(2)i(6)A) at position 37 in tRNAs that read codons beginning with uridine. The chain is tRNA-2-methylthio-N(6)-dimethylallyladenosine synthase from Neisseria gonorrhoeae (strain ATCC 700825 / FA 1090).